We begin with the raw amino-acid sequence, 299 residues long: MSGPNPPGREPDEPESEPVSDTGDERASGNHLPPVAGGGDKLPSDQTGETDAYSRAYSAPESEHVTGGPYVPADLRLYDYDDYEESSDLDDELAAPRWPWVVGVAAIIAAVALVVSVSLLVTRPHTSKLATGDTTSSAPPVQDEITTTKPAPPPPPPAPPPTTEIPTATETQTVTVTPPPPPPPATTTAPPPATTTTAAAPPPTTTTPTGPRQVTYSVTGTKAPGDIISVTYVDAAGRRRTQHNVYIPWSMTVTPISQSDVGSVEASSLFRVSKLNCSITTSDGTVLSSNSNDGPQTSC.

The interval 1 to 72 (MSGPNPPGRE…EHVTGGPYVP (72 aa)) is disordered. The chain crosses the membrane as a helical span at residues 101–121 (VVGVAAIIAAVALVVSVSLLV). Polar residues predominate over residues 128–139 (KLATGDTTSSAP). Residues 128-213 (KLATGDTTSS…TTTTPTGPRQ (86 aa)) are disordered. Positions 150–163 (PAPPPPPPAPPPTT) are enriched in pro residues. The span at 164–176 (EIPTATETQTVTV) shows a compositional bias: low complexity. Residues 177–193 (TPPPPPPPATTTAPPPA) show a composition bias toward pro residues.

Belongs to the MmpS family.

It localises to the cell membrane. The protein is Probable transport accessory protein MmpS3 (mmpS3) of Mycobacterium tuberculosis (strain CDC 1551 / Oshkosh).